The primary structure comprises 283 residues: Pantothenate synthetase (283 aa).

31-38 lines the ATP pocket; sequence MGALHDGH. His38 serves as the catalytic Proton donor. A (R)-pantoate-binding site is contributed by Gln62. Gln62 is a beta-alanine binding site. Residue 148–151 coordinates ATP; the sequence is GKKD. Gln154 provides a ligand contact to (R)-pantoate. ATP-binding positions include Val177 and 185–188; that span reads KSSR.

The protein belongs to the pantothenate synthetase family. Homodimer.

It is found in the cytoplasm. The enzyme catalyses (R)-pantoate + beta-alanine + ATP = (R)-pantothenate + AMP + diphosphate + H(+). It functions in the pathway cofactor biosynthesis; (R)-pantothenate biosynthesis; (R)-pantothenate from (R)-pantoate and beta-alanine: step 1/1. In terms of biological role, catalyzes the condensation of pantoate with beta-alanine in an ATP-dependent reaction via a pantoyl-adenylate intermediate. In Staphylococcus aureus (strain USA300), this protein is Pantothenate synthetase.